The sequence spans 200 residues: Outer-membrane lipoprotein carrier protein (200 aa).

An N-terminal signal peptide occupies residues 1–18; sequence MIGLFLAAPLVLSSAVWA.

The protein belongs to the LolA family. As to quaternary structure, monomer.

The protein localises to the periplasm. Functionally, participates in the translocation of lipoproteins from the inner membrane to the outer membrane. Only forms a complex with a lipoprotein if the residue after the N-terminal Cys is not an aspartate (The Asp acts as a targeting signal to indicate that the lipoprotein should stay in the inner membrane). This chain is Outer-membrane lipoprotein carrier protein, found in Photobacterium profundum (strain SS9).